A 394-amino-acid chain; its full sequence is Elongation factor Tu (394 aa).

A tr-type G domain is found at 10–204; sequence KPHVNIGTIG…AVDSWIPLPE (195 aa). The segment at 19–26 is G1; the sequence is GHVDHGKT. 19–26 is a binding site for GTP; sequence GHVDHGKT. Thr-26 serves as a coordination point for Mg(2+). The G2 stretch occupies residues 60–64; the sequence is GITIN. Residues 81-84 are G3; sequence DCPG. GTP contacts are provided by residues 81 to 85 and 136 to 139; these read DCPGH and NKCD. Positions 136–139 are G4; the sequence is NKCD. The segment at 174 to 176 is G5; that stretch reads SGL.

Belongs to the TRAFAC class translation factor GTPase superfamily. Classic translation factor GTPase family. EF-Tu/EF-1A subfamily. As to quaternary structure, monomer.

The protein localises to the cytoplasm. The enzyme catalyses GTP + H2O = GDP + phosphate + H(+). Its function is as follows. GTP hydrolase that promotes the GTP-dependent binding of aminoacyl-tRNA to the A-site of ribosomes during protein biosynthesis. In Ureaplasma urealyticum serovar 10 (strain ATCC 33699 / Western), this protein is Elongation factor Tu.